Here is a 950-residue protein sequence, read N- to C-terminus: Xylosyltransferase 1 (950 aa).

The Cytoplasmic segment spans residues 1 to 17 (MVAAPSARRLVRRSHSA). The chain crosses the membrane as a helical; Signal-anchor for type II membrane protein span at residues 18 to 38 (LLAALTVLLLQTLVGWNFSSL). At 39–950 (HSGAGERRGG…GAVKPDGRLR (912 aa)) the chain is on the lumenal side. A disordered region spans residues 42-246 (AGERRGGAAA…ELRYDQPPKC (205 aa)). The span at 91–104 (PPARARARALAGCP) shows a compositional bias: low complexity. Over residues 134 to 150 (KVRTDSNNENSVPKDFE) the composition is skewed to basic and acidic residues. Polar residues predominate over residues 152–161 (VDNSNFAPRT). Over residues 166 to 193 (HQPELAKKPPSRQKELLKRRLEQEEKGK) the composition is skewed to basic and acidic residues. Asparagine 215 is a glycosylation site (N-linked (GlcNAc...) asparagine). Intrachain disulfides connect cysteine 246–cysteine 274, cysteine 290–cysteine 531, cysteine 550–cysteine 563, and cysteine 552–cysteine 561. UDP-alpha-D-xylose is bound by residues valine 322, aspartate 350, and 379–381 (TIW). The N-linked (GlcNAc...) asparagine glycan is linked to asparagine 410. Residue 483-484 (DW) participates in UDP-alpha-D-xylose binding. Residues serine 564 and 587–588 (RK) each bind UDP-alpha-D-xylose. Intrachain disulfides connect cysteine 664/cysteine 918 and cysteine 911/cysteine 924. A glycan (N-linked (GlcNAc...) asparagine) is linked at asparagine 768. A disordered region spans residues 931–950 (SFSPDPKSELGAVKPDGRLR).

This sequence belongs to the glycosyltransferase 14 family. XylT subfamily. In terms of assembly, monomer. A divalent metal cation is required as a cofactor. Contains 7 disulfide bonds. In terms of processing, N-glycosylated.

It is found in the golgi apparatus membrane. It catalyses the reaction UDP-alpha-D-xylose + L-seryl-[protein] = 3-O-(beta-D-xylosyl)-L-seryl-[protein] + UDP + H(+). It participates in glycan metabolism; chondroitin sulfate biosynthesis. It functions in the pathway glycan metabolism; heparan sulfate biosynthesis. Functionally, catalyzes the first step in the biosynthesis of chondroitin sulfate and dermatan sulfate proteoglycans, such as DCN. Transfers D-xylose from UDP-D-xylose to specific serine residues of the core protein. Required for normal maturation of chondrocytes during bone development, normal onset of ossification and normal embryonic and postnatal skeleton development, especially of the long bones. The protein is Xylosyltransferase 1 (XYLT1) of Canis lupus familiaris (Dog).